The sequence spans 459 residues: Autophagy-related protein 18 (459 aa).

WD repeat units lie at residues 1–39 (MTSP…RIFS) and 188–228 (AHRS…KLYQ). The segment at 229 to 232 (FRRG) is necessary for proper localization to vacuole membrane. Positions 229–233 (FRRGT) match the L/FRRG motif motif. A WD 3 repeat occupies 233 to 272 (TYPSTIYSMSFNLSSTLLCVSSTSDTIHIFRLGAPPGNTT). A disordered region spans residues 264 to 339 (LGAPPGNTTP…RGSGSFSSML (76 aa)). The span at 265–277 (GAPPGNTTPAGAP) shows a compositional bias: low complexity. Residues 285–296 (RQDRWSRARSYD) show a composition bias toward basic and acidic residues. Gly residues predominate over residues 319 to 330 (PGAGNNQGGHTR). The WD 4 repeat unit spans residues 393–433 (APGGPLRSVVAMSSSSPQVMVVTSDGGFYVYNIDMEHGGEG).

The protein belongs to the WD repeat PROPPIN family. In terms of assembly, component of the PI(3,5)P2 regulatory complex. Interacts with ATG2 and ATG9. The ATG2-ATG18 complex is essential for autophagosome formation.

It is found in the preautophagosomal structure membrane. The protein resides in the vacuole membrane. It localises to the endosome membrane. Functionally, component of the PI(3,5)P2 regulatory complex that regulates both the synthesis and turnover of phosphatidylinositol 3,5-bisphosphate (PtdIns(3,5)P2). Plays an important role in osmotically-induced vacuole fragmentation. Required for cytoplasm to vacuole transport (Cvt) vesicle formation, pexophagy and starvation-induced autophagy. Involved in correct ATG9 trafficking to the pre-autophagosomal structure. With ATG2, protects ATG8 from ATG4-mediated cleavage. Autophagy is required for proper vegetative growth, asexual/sexual reproduction, and full virulence. Autophagy is particularly involved in the biosynthesis of deoxynivalenol (DON), an important virulence determinant. This is Autophagy-related protein 18 from Gibberella zeae (strain ATCC MYA-4620 / CBS 123657 / FGSC 9075 / NRRL 31084 / PH-1) (Wheat head blight fungus).